A 132-amino-acid polypeptide reads, in one-letter code: Small ribosomal subunit protein uS8 (132 aa).

The protein belongs to the universal ribosomal protein uS8 family. Part of the 30S ribosomal subunit. Contacts proteins S5 and S12.

One of the primary rRNA binding proteins, it binds directly to 16S rRNA central domain where it helps coordinate assembly of the platform of the 30S subunit. In Streptomyces avermitilis (strain ATCC 31267 / DSM 46492 / JCM 5070 / NBRC 14893 / NCIMB 12804 / NRRL 8165 / MA-4680), this protein is Small ribosomal subunit protein uS8.